Here is a 364-residue protein sequence, read N- to C-terminus: MSTINTVSLNQDASCMSVALDTGYKIFQINPLKLRAQRQFNDGGLSIVKMLFRSNVLLLVGGGGNPKYAPNKLIVWDDVKERPVKELELNFEIKGICFDGKLLAIATASKLFLYQFGNNLKLQRCLDTQNPKGLCAMVTTVEKTAIVFPSRKVGQLQILFLFKDHMNTSIVPAHDSEISCLGISKTGSKIASSSTNGTLIRIWNSETGEKICEFRRGYQHTAVCQLAFSPDELLLACASKKETLHIFSLHGSPNTIRQLTSEEPYEEASEFKSSTTEPRQTHWKRKLLKLIDSGKRAHWRIQLYQSNPVLLHWLDEMTILICYKDAAYQKLKLTIEESSKSVEHANQHVCFHYDYTLEADGSLC.

2 WD repeats span residues A173–E213 and Y218–R257.

Belongs to the WD repeat PROPPIN family.

Its subcellular location is the vacuole membrane. The protein resides in the cytoplasmic vesicle membrane. It localises to the preautophagosomal structure membrane. Functionally, involved in mitochondrial or peroxisomal functions and amino acid signaling pathways. This is SVP1-like protein 2 (hsv2) from Schizosaccharomyces pombe (strain 972 / ATCC 24843) (Fission yeast).